Reading from the N-terminus, the 41-residue chain is Alpha-conotoxin-like Pu1.2 (41 aa).

Residues 1 to 21 (LDGRNAAADFETSDLLAMTIR) constitute a propeptide that is removed on maturation. Intrachain disulfides connect Cys-24–Cys-30 and Cys-25–Cys-37. Cysteine amide is present on Cys-37. A propeptide spanning residues 38–41 (GGKR) is cleaved from the precursor.

Belongs to the conotoxin A superfamily. In terms of processing, non-native isomers 'ribbon' (with disulfide connectivity C1-C4, C2-C3) and 'beads' (with disulfide connectivity C1-C2, C3-C4) also inhibit high voltage-activated (HVA) calcium channel currents in rat DRG neurons (25-30% inhibition at 1 uM toxin). Post-translationally, mutants Pu1.2(9-16), [C3S; C9S]Pu1.2 and [C4S]Pu1.2(1-9) are all C-terminally amidated. In terms of tissue distribution, expressed by the venom duct.

The protein localises to the secreted. Its function is as follows. Alpha-conotoxins act on postsynaptic membranes, they bind to the nicotinic acetylcholine receptors (nAChR) and thus inhibit them. This toxin also inhibits high voltage-activated (HVA) calcium channel currents in rat DRG neurons (27% inhibition at 1 uM toxin) probably by activating GABA(B) receptors (GABBR1 and/or GABBR2). The sequence is that of Alpha-conotoxin-like Pu1.2 from Conus pulicarius (Flea-bitten cone).